The following is a 100-amino-acid chain: Small ribosomal subunit protein uS14c (100 aa).

The protein belongs to the universal ribosomal protein uS14 family. As to quaternary structure, part of the 30S ribosomal subunit.

Its subcellular location is the plastid. The protein resides in the chloroplast. Binds 16S rRNA, required for the assembly of 30S particles. The protein is Small ribosomal subunit protein uS14c of Adiantum capillus-veneris (Maidenhair fern).